Reading from the N-terminus, the 73-residue chain is Probable cytochrome b-c1 complex subunit 8 (73 aa).

Topologically, residues 1–42 are mitochondrial matrix; sequence MGQASKVFGKQITYSVSPFQQKLFVNYFKNAIPHLRRGVKDN. Residues 43–60 traverse the membrane as a helical segment; sequence FFCSVPYFAALYITVNWA. The Mitochondrial intermembrane segment spans residues 61-73; sequence NETYHNEMKDHWY.

This sequence belongs to the UQCRQ/QCR8 family. In terms of assembly, component of the ubiquinol-cytochrome c oxidoreductase (cytochrome b-c1 complex, complex III, CIII), a multisubunit enzyme composed of 3 respiratory subunits cytochrome b, cytochrome c1 and Rieske protein, 2 core protein subunits, and additional low-molecular weight protein subunits. The complex exists as an obligatory dimer and forms supercomplexes (SCs) in the inner mitochondrial membrane with cytochrome c oxidase (complex IV, CIV).

It is found in the mitochondrion inner membrane. In terms of biological role, component of the ubiquinol-cytochrome c oxidoreductase, a multisubunit transmembrane complex that is part of the mitochondrial electron transport chain which drives oxidative phosphorylation. The respiratory chain contains 3 multisubunit complexes succinate dehydrogenase (complex II, CII), ubiquinol-cytochrome c oxidoreductase (cytochrome b-c1 complex, complex III, CIII) and cytochrome c oxidase (complex IV, CIV), that cooperate to transfer electrons derived from NADH and succinate to molecular oxygen, creating an electrochemical gradient over the inner membrane that drives transmembrane transport and the ATP synthase. The cytochrome b-c1 complex catalyzes electron transfer from ubiquinol to cytochrome c, linking this redox reaction to translocation of protons across the mitochondrial inner membrane, with protons being carried across the membrane as hydrogens on the quinol. In the process called Q cycle, 2 protons are consumed from the matrix, 4 protons are released into the intermembrane space and 2 electrons are passed to cytochrome c. This is Probable cytochrome b-c1 complex subunit 8 from Dictyostelium discoideum (Social amoeba).